Here is a 566-residue protein sequence, read N- to C-terminus: Proline--tRNA ligase (566 aa).

Belongs to the class-II aminoacyl-tRNA synthetase family. ProS type 1 subfamily. In terms of assembly, homodimer.

The protein resides in the cytoplasm. The enzyme catalyses tRNA(Pro) + L-proline + ATP = L-prolyl-tRNA(Pro) + AMP + diphosphate. Catalyzes the attachment of proline to tRNA(Pro) in a two-step reaction: proline is first activated by ATP to form Pro-AMP and then transferred to the acceptor end of tRNA(Pro). As ProRS can inadvertently accommodate and process non-cognate amino acids such as alanine and cysteine, to avoid such errors it has two additional distinct editing activities against alanine. One activity is designated as 'pretransfer' editing and involves the tRNA(Pro)-independent hydrolysis of activated Ala-AMP. The other activity is designated 'posttransfer' editing and involves deacylation of mischarged Ala-tRNA(Pro). The misacylated Cys-tRNA(Pro) is not edited by ProRS. This is Proline--tRNA ligase from Exiguobacterium sibiricum (strain DSM 17290 / CCUG 55495 / CIP 109462 / JCM 13490 / 255-15).